The following is a 472-amino-acid chain: Argininosuccinate lyase (472 aa).

This sequence belongs to the lyase 1 family. Argininosuccinate lyase subfamily.

It is found in the cytoplasm. It carries out the reaction 2-(N(omega)-L-arginino)succinate = fumarate + L-arginine. It functions in the pathway amino-acid biosynthesis; L-arginine biosynthesis; L-arginine from L-ornithine and carbamoyl phosphate: step 3/3. The chain is Argininosuccinate lyase from Synechococcus sp. (strain CC9902).